The sequence spans 227 residues: Ribonuclease 3 (227 aa).

The region spanning 4 to 126 is the RNase III domain; sequence LDRLERKIGY…IIGAMSLDQG (123 aa). Residue Glu39 participates in Mg(2+) binding. The active site involves Asp43. The Mg(2+) site is built by Asp112 and Glu115. Glu115 is a catalytic residue. The 74-residue stretch at 153 to 226 folds into the DRBM domain; the sequence is DAKTRLQEYL…AEQILKELDI (74 aa).

This sequence belongs to the ribonuclease III family. As to quaternary structure, homodimer. The cofactor is Mg(2+).

The protein resides in the cytoplasm. The enzyme catalyses Endonucleolytic cleavage to 5'-phosphomonoester.. Functionally, digests double-stranded RNA. Involved in the processing of primary rRNA transcript to yield the immediate precursors to the large and small rRNAs (23S and 16S). Processes some mRNAs, and tRNAs when they are encoded in the rRNA operon. Processes pre-crRNA and tracrRNA of type II CRISPR loci if present in the organism. In Haemophilus influenzae (strain 86-028NP), this protein is Ribonuclease 3.